Consider the following 329-residue polypeptide: Glycerol-3-phosphate dehydrogenase [NAD(P)+] (329 aa).

NADPH contacts are provided by W15, H35, and K107. Residues K107, G135, and S137 each contribute to the sn-glycerol 3-phosphate site. A139 lines the NADPH pocket. 5 residues coordinate sn-glycerol 3-phosphate: K190, D243, S253, R254, and N255. Residue K190 is the Proton acceptor of the active site. R254 contributes to the NADPH binding site. Positions 276 and 278 each coordinate NADPH.

It belongs to the NAD-dependent glycerol-3-phosphate dehydrogenase family.

It is found in the cytoplasm. It catalyses the reaction sn-glycerol 3-phosphate + NAD(+) = dihydroxyacetone phosphate + NADH + H(+). The enzyme catalyses sn-glycerol 3-phosphate + NADP(+) = dihydroxyacetone phosphate + NADPH + H(+). Its pathway is membrane lipid metabolism; glycerophospholipid metabolism. Functionally, catalyzes the reduction of the glycolytic intermediate dihydroxyacetone phosphate (DHAP) to sn-glycerol 3-phosphate (G3P), the key precursor for phospholipid synthesis. The protein is Glycerol-3-phosphate dehydrogenase [NAD(P)+] of Rhodopseudomonas palustris (strain TIE-1).